A 193-amino-acid polypeptide reads, in one-letter code: MSDSAPTNPTPTNPAPEESASAVATLEPGPVSQWLNTQGFDHDVLDPDHVGVEQIGVESAVLPIIVAAIKSHGFDYLQCQGGYDEGPGERLVCFYHFIAMAEQVEAMTAGRPHELREVRLKVFLSREGTPSLPSIYGLFRGADWQERETFDMYGIEFEGHPHPKRLLMPEDWKGWPLRKDYVQPDFYEMQDAF.

A disordered region spans residues 1-21; sequence MSDSAPTNPTPTNPAPEESAS.

The protein belongs to the complex I 30 kDa subunit family. As to quaternary structure, NDH-1 can be composed of about 15 different subunits; different subcomplexes with different compositions have been identified which probably have different functions.

It is found in the cellular thylakoid membrane. The enzyme catalyses a plastoquinone + NADH + (n+1) H(+)(in) = a plastoquinol + NAD(+) + n H(+)(out). It catalyses the reaction a plastoquinone + NADPH + (n+1) H(+)(in) = a plastoquinol + NADP(+) + n H(+)(out). Its function is as follows. NDH-1 shuttles electrons from an unknown electron donor, via FMN and iron-sulfur (Fe-S) centers, to quinones in the respiratory and/or the photosynthetic chain. The immediate electron acceptor for the enzyme in this species is believed to be plastoquinone. Couples the redox reaction to proton translocation, and thus conserves the redox energy in a proton gradient. Cyanobacterial NDH-1 also plays a role in inorganic carbon-concentration. The sequence is that of NAD(P)H-quinone oxidoreductase subunit J from Synechococcus sp. (strain CC9902).